Here is a 214-residue protein sequence, read N- to C-terminus: MNLEKQLHDGLKAIPELSADTGHLCSRLLRYIELIAKWNSTHNLTSVRNPESMITRHMLDSLVILPHVSGPGIVDVGSGAGFPGIPVALARPEWQVTLVESNQKKAAFLLQAVLELGLPNISVKQGRVEKIKLENKVDTVVSRAFSSLERFMSLSKHLSENDSDHCRFIAMKGEFPDMELMQLSSEFVVEKIVAVTVPGLKAKRHLVVIRYQPG.

S-adenosyl-L-methionine contacts are provided by residues G77, F82, 128 to 129 (VE), and R143.

The protein belongs to the methyltransferase superfamily. RNA methyltransferase RsmG family.

It localises to the cytoplasm. The catalysed reaction is guanosine(527) in 16S rRNA + S-adenosyl-L-methionine = N(7)-methylguanosine(527) in 16S rRNA + S-adenosyl-L-homocysteine. In terms of biological role, specifically methylates the N7 position of guanine in position 527 of 16S rRNA. The polypeptide is Ribosomal RNA small subunit methyltransferase G (Nitrosomonas europaea (strain ATCC 19718 / CIP 103999 / KCTC 2705 / NBRC 14298)).